Consider the following 464-residue polypeptide: Spore coat protein SP65 (464 aa).

An N-terminal signal peptide occupies residues 1–17 (MKVLLLLVCLVFAYVNA). Residues 21–43 (ACYNVVCPSNYQCRAEGDQAYCV) form the Follistatin-like 1 domain. N-linked (GlcNAc...) asparagine glycosylation occurs at asparagine 111. Follistatin-like domains are found at residues 121 to 143 (VCRDFQCPVGTHCFNGERGPHCV) and 151 to 173 (LCRVTKCSYDFTCKMVRGNPTCL). N-linked (GlcNAc...) asparagine glycosylation is present at asparagine 247. The segment at 250–320 (STTGATTGAT…STTGAATTAP (71 aa)) is disordered.

As to quaternary structure, binds to the C-terminal region of pspB.

The protein resides in the spore wall. Its function is as follows. Forms a triad with cellulose and pspB that is essential for spore outer layer formation. This chain is Spore coat protein SP65 (cotE), found in Dictyostelium discoideum (Social amoeba).